Here is a 243-residue protein sequence, read N- to C-terminus: NH(3)-dependent NAD(+) synthetase (243 aa).

31–38 is an ATP binding site; that stretch reads GVSGGIDS. Asp37 contacts Mg(2+). A deamido-NAD(+)-binding site is contributed by Arg110. Thr130 contacts ATP. Glu135 provides a ligand contact to Mg(2+). Lys143 and Asp150 together coordinate deamido-NAD(+). Lys159 and Ser181 together coordinate ATP. Residue 227 to 228 participates in deamido-NAD(+) binding; it reads HK.

Belongs to the NAD synthetase family. As to quaternary structure, homodimer.

The catalysed reaction is deamido-NAD(+) + NH4(+) + ATP = AMP + diphosphate + NAD(+) + H(+). It participates in cofactor biosynthesis; NAD(+) biosynthesis; NAD(+) from deamido-NAD(+) (ammonia route): step 1/1. In terms of biological role, catalyzes the ATP-dependent amidation of deamido-NAD to form NAD. Uses ammonia as a nitrogen source. The polypeptide is NH(3)-dependent NAD(+) synthetase (Malacoplasma penetrans (strain HF-2) (Mycoplasma penetrans)).